The chain runs to 135 residues: Large ribosomal subunit protein eL32 (135 aa).

The protein belongs to the eukaryotic ribosomal protein eL32 family.

The chain is Large ribosomal subunit protein eL32 from Methanococcus maripaludis (strain C7 / ATCC BAA-1331).